A 133-amino-acid polypeptide reads, in one-letter code: Large ribosomal subunit protein uL22 (133 aa).

This sequence belongs to the universal ribosomal protein uL22 family. In terms of assembly, part of the 50S ribosomal subunit.

In terms of biological role, this protein binds specifically to 23S rRNA; its binding is stimulated by other ribosomal proteins, e.g. L4, L17, and L20. It is important during the early stages of 50S assembly. It makes multiple contacts with different domains of the 23S rRNA in the assembled 50S subunit and ribosome. The globular domain of the protein is located near the polypeptide exit tunnel on the outside of the subunit, while an extended beta-hairpin is found that lines the wall of the exit tunnel in the center of the 70S ribosome. The chain is Large ribosomal subunit protein uL22 from Aquifex aeolicus (strain VF5).